Consider the following 223-residue polypeptide: Glutathione S-transferase Z2 (223 aa).

A GST N-terminal domain is found at 10–91 (AKLKLYSYWR…YLDDKYPEPP (82 aa)). Glutathione-binding positions include 20 to 21 (SS), 20 to 25 (SSCAHR), Gln49, 49 to 50 (QS), 62 to 63 (TV), Val63, 75 to 76 (DS), Gln115, and 119 to 121 (NMA). Residues 96–221 (DYHKRAVNYQ…VPEKQPDTPS (126 aa)) form the GST C-terminal domain.

The protein belongs to the GST superfamily. Zeta family.

It localises to the cytoplasm. The protein localises to the cytosol. The enzyme catalyses RX + glutathione = an S-substituted glutathione + a halide anion + H(+). In terms of biological role, may be involved in the conjugation of reduced glutathione to a wide number of exogenous and endogenous hydrophobic electrophiles and have a detoxification role against certain herbicides. This Arabidopsis thaliana (Mouse-ear cress) protein is Glutathione S-transferase Z2 (GSTZ2).